The following is a 122-amino-acid chain: UPF0344 protein BPUM_1008 (122 aa).

The next 4 helical transmembrane spans lie at L5–G25, I33–Y53, I60–F80, and S93–L113.

Belongs to the UPF0344 family.

It is found in the cell membrane. In Bacillus pumilus (strain SAFR-032), this protein is UPF0344 protein BPUM_1008.